Consider the following 338-residue polypeptide: Glyceraldehyde-3-phosphate dehydrogenase (338 aa).

NAD(+)-binding positions include 13–14 (RI), aspartate 35, and arginine 80. D-glyceraldehyde 3-phosphate-binding positions include 151–153 (SCT), threonine 182, 211–212 (TG), and arginine 234. Cysteine 152 functions as the Nucleophile in the catalytic mechanism. Residue asparagine 316 coordinates NAD(+).

It belongs to the glyceraldehyde-3-phosphate dehydrogenase family. As to quaternary structure, homotetramer.

The protein localises to the cytoplasm. The catalysed reaction is D-glyceraldehyde 3-phosphate + phosphate + NAD(+) = (2R)-3-phospho-glyceroyl phosphate + NADH + H(+). It functions in the pathway carbohydrate degradation; glycolysis; pyruvate from D-glyceraldehyde 3-phosphate: step 1/5. The chain is Glyceraldehyde-3-phosphate dehydrogenase (GPDA) from Colletotrichum gloeosporioides (Anthracnose fungus).